Consider the following 158-residue polypeptide: Endoribonuclease YbeY (158 aa).

Positions 117, 121, and 127 each coordinate Zn(2+).

It belongs to the endoribonuclease YbeY family. Requires Zn(2+) as cofactor.

Its subcellular location is the cytoplasm. In terms of biological role, single strand-specific metallo-endoribonuclease involved in late-stage 70S ribosome quality control and in maturation of the 3' terminus of the 16S rRNA. The protein is Endoribonuclease YbeY of Buchnera aphidicola subsp. Schizaphis graminum (strain Sg).